The primary structure comprises 421 residues: MQTTHLTETHFADLPINEQVVKALSAANFSHCTPIQALSLPPLLEGNDIAGQAQTGTGKTIAFLVATFHYLLSNPQPTKKQPRAIIMAPTRELAVQIFNDAELLSQHTGLSLGLIYGGEGYQSQREKLEEGVDIIIGTTGRIIDYYKQNIFSLAGIQVAVLDEADRMFDLGFIKDIRYLFNRMPKPTERLSMLFSATLSYRVQELAYEHMDNPTHVQVEPERKTGTRIKEELFYPSDEDKMALLLSLMEEEWPDKAIVFANTKHSCEKVADWLQADGHRVGLLSGDVPQNKRLKILEDFTSGKLDILVATDVAARGLHIPMVSHVFNYDLPDDAEDYVHRIGRTGRAGQSGSSISFACERYALNLPAIETYIEHAIPVTEYQADALLRDVTPPKPRHKKRMQNGRNPQKRQSSGSRNRRKP.

The Q motif motif lies at Thr-9–Ala-37. One can recognise a Helicase ATP-binding domain in the interval Leu-40 to Val-216. Ala-53–Thr-60 lines the ATP pocket. Positions Asp-162 to Asp-165 match the DEAD box motif. Residues Lys-240–Leu-387 enclose the Helicase C-terminal domain. Residues Asp-389–Pro-421 form a disordered region. Residues Asn-403–Ser-415 are compositionally biased toward polar residues.

The protein belongs to the DEAD box helicase family. RhlB subfamily. As to quaternary structure, component of the RNA degradosome, which is a multiprotein complex involved in RNA processing and mRNA degradation.

The protein resides in the cytoplasm. The catalysed reaction is ATP + H2O = ADP + phosphate + H(+). Functionally, DEAD-box RNA helicase involved in RNA degradation. Has RNA-dependent ATPase activity and unwinds double-stranded RNA. The chain is ATP-dependent RNA helicase RhlB from Pseudoalteromonas atlantica (strain T6c / ATCC BAA-1087).